Consider the following 530-residue polypeptide: Nectin-2 (530 aa).

The signal sequence occupies residues 1 to 31 (MARAAVLPPSRLSPTLPLLPLLLLLLQETGA). Positions 32–147 (QDVRVRVLPE…NGTRRGVTWL (116 aa)) constitute an Ig-like V-type domain. Over 32–351 (QDVRVRVLPE…STAGAGATGG (320 aa)) the chain is Extracellular. A disulfide bridge links C54 with C131. 2 N-linked (GlcNAc...) asparagine glycosylation sites follow: N128 and N138. Ig-like C2-type domains follow at residues 153 to 247 (PENH…VTLS) and 252 to 337 (PEVS…VILV). Cystine bridges form between C174-C229 and C274-C320. Residue N315 is glycosylated (N-linked (GlcNAc...) asparagine). The chain crosses the membrane as a helical span at residues 352–372 (IIGGIIAAIIATAVAGTGILI). Topologically, residues 373-530 (CRQQRKEQRL…DFFVSRAMYV (158 aa)) are cytoplasmic. The tract at residues 382 to 407 (LQAADEEEELEGPPSYKPPTPKAKLE) is disordered. Phosphothreonine is present on T401. S424 is modified (phosphoserine).

Belongs to the nectin family. As to quaternary structure, can form trans-heterodimers with NECTIN3. Interacts with CD226 or with PVRIG; these interactions are competitive and have a differential functional outcome on T-cell activation, either positive or negative, respectively. Binds with low affinity to TIGIT. Brain, spinal cord, spleen, kidney, heart and liver.

The protein localises to the cell membrane. In terms of biological role, modulator of T-cell signaling. Can be either a costimulator of T-cell function, or a coinhibitor, depending on the receptor it binds to. Upon binding to CD226, stimulates T-cell proliferation and cytokine production, including that of IL2, IL5, IL10, IL13, and IFNG. Upon interaction with PVRIG, inhibits T-cell proliferation. These interactions are competitive. Probable cell adhesion protein. The protein is Nectin-2 of Mus musculus (Mouse).